We begin with the raw amino-acid sequence, 565 residues long: Periplasmic trehalase (565 aa).

A signal peptide spans Met1 to Ala30. Residues Arg152, Trp159–Asp160, Asn196, Arg205–Gln207, Arg277–Glu279, and Gly310 each bind substrate. Residues Asp312 and Glu496 each act as proton donor/acceptor in the active site. Glu511 is a binding site for substrate. Residues Cys539–Pro565 form a disordered region.

This sequence belongs to the glycosyl hydrolase 37 family. In terms of assembly, monomer.

It localises to the periplasm. The catalysed reaction is alpha,alpha-trehalose + H2O = alpha-D-glucose + beta-D-glucose. Functionally, provides the cells with the ability to utilize trehalose at high osmolarity by splitting it into glucose molecules that can subsequently be taken up by the phosphotransferase-mediated uptake system. The polypeptide is Periplasmic trehalase (Escherichia coli O7:K1 (strain IAI39 / ExPEC)).